The chain runs to 380 residues: MAPNLRKSHPLLKMINNSLIDLPTPSNISAWWNFGSLLGICLATQILTGLLLAAHYTADTTLAFSSVAHTCRNVQHGWLIRNLHANGASFFFICIYLHIGRGLYYGSYLYKETWNTGVILLLTLMATAFVGYVLPWGQMSFWGATVITNLFSAVPYGGQTLVEWAWGGFSVDNPTLTRFFTLHFLLPFMIMGLTLIHLTFLHESGSNNPLGIVSNCDKIPFHPYFSLKDILGFTLMLLPLMTLALFSPNLLGDPENFTPANPLVTPPHIKPEWYFLFAYAILRSIPNKLGGVLALAASVLILFLAPLLHKSKQRTMTFRPFSQLLFWTLAANLLILTWVGSQPVEHPFIIIGQLASLTYFTILLILFPIIGALENKMLNY.

The next 4 helical transmembrane spans lie at 34-54 (FGSLLGICLATQILTGLLLAA), 78-99 (WLIRNLHANGASFFFICIYLHI), 114-134 (WNTGVILLLTLMATAFVGYVL), and 179-199 (FFTLHFLLPFMIMGLTLIHLT). Positions 84 and 98 each coordinate heme b. The heme b site is built by His183 and His197. Residue His202 participates in a ubiquinone binding. 4 helical membrane passes run 227–247 (LKDILGFTLMLLPLMTLALFS), 289–309 (LGGVLALAASVLILFLAPLLH), 321–341 (FSQLLFWTLAANLLILTWVGS), and 348–368 (FIIIGQLASLTYFTILLILFP).

It belongs to the cytochrome b family. The cytochrome bc1 complex contains 11 subunits: 3 respiratory subunits (MT-CYB, CYC1 and UQCRFS1), 2 core proteins (UQCRC1 and UQCRC2) and 6 low-molecular weight proteins (UQCRH/QCR6, UQCRB/QCR7, UQCRQ/QCR8, UQCR10/QCR9, UQCR11/QCR10 and a cleavage product of UQCRFS1). This cytochrome bc1 complex then forms a dimer. It depends on heme b as a cofactor.

The protein resides in the mitochondrion inner membrane. Component of the ubiquinol-cytochrome c reductase complex (complex III or cytochrome b-c1 complex) that is part of the mitochondrial respiratory chain. The b-c1 complex mediates electron transfer from ubiquinol to cytochrome c. Contributes to the generation of a proton gradient across the mitochondrial membrane that is then used for ATP synthesis. This Antigone antigone (Sarus crane) protein is Cytochrome b (MT-CYB).